Consider the following 235-residue polypeptide: CD-NTase-associated protein 13 (235 aa).

The next 2 helical transmembrane spans lie at 14–34 (IVHHVSTSLNIISFIIVLIWI) and 45–65 (IIFTVNLEAIVVFISILIVGL).

It in the C-terminal section; belongs to the bacterial STING family. As to quaternary structure, homodimer.

The protein localises to the cell inner membrane. Its function is as follows. Effector protein of a CBASS antivirus system. CBASS (cyclic oligonucleotide-based antiphage signaling system) provides immunity against bacteriophage. The CD-NTase protein synthesizes cyclic nucleotides in response to infection; these serve as specific second messenger signals. The signals activate a diverse range of effectors, leading to bacterial cell death and thus abortive phage infection. A type I-D(GG) CBASS system. Functionally, binds cyclic dinucleotides: binds c-di-GMP (synthesized by the cognate CdnE encoded upstream in the same operon), cyclic 3'3'-cyclic GMP-AMP (3'3'-cGAMP) but not cUMP-AMP. The effector protein for this CBASS system, its activity is stimulated by c-di-GMP and leads to cell death. This Flavobacteriaceae sp. genome_bin_11 protein is CD-NTase-associated protein 13.